We begin with the raw amino-acid sequence, 343 residues long: Tribbles homolog 2 (343 aa).

Residues 25–50 (EELSSIRSAEPSQSFSPNLGSPSPPE) form a disordered region. Over residues 29–45 (SIRSAEPSQSFSPNLGS) the composition is skewed to polar residues. The Protein kinase domain maps to 61 to 308 (IGKYLLLEPL…SQEILDHPWF (248 aa)).

It belongs to the protein kinase superfamily. CAMK Ser/Thr protein kinase family. Tribbles subfamily. Highly expressed in the thyroid, also present in ovary and cerebrum.

The protein resides in the cytoplasm. The protein localises to the cytoskeleton. Interacts with MAPK kinases and regulates activation of MAP kinases. Does not display kinase activity. The polypeptide is Tribbles homolog 2 (Canis lupus familiaris (Dog)).